Reading from the N-terminus, the 2176-residue chain is Methyl-CpG-binding domain-containing protein 9 (2176 aa).

Residues 1-13 (MEPTDSTNEQLGD) are compositionally biased toward polar residues. Disordered stretches follow at residues 1–20 (MEPT…AAVK) and 28–85 (GIDL…RDAS). The PHD-type 1 zinc finger occupies 83 to 133 (DASCGACGRPESIELVVVCDACERGFHMSCVNDGVEAAPSADWMCSDCRTG). The segment at 86 to 131 (CGACGRPESIELVVVCDACERGFHMSCVNDGVEAAPSADWMCSDCR) adopts an RING-type 1; degenerate zinc-finger fold. One can recognise an MBD domain in the interval 258 to 327 (RHFISERHGV…MDAEIRNENS (70 aa)). An FYR N-terminal domain is found at 403–456 (GCPMQFEDFFVLSLGRIDIRQSYHNVNVIYPIGYKSCWHDKITGSLFTCEVSDG). Positions 491-511 (EQNSDKLSNRRDSTQERDDDA) form a coiled coil. The FYR C-terminal domain maps to 550–698 (SSRVDFDKNL…ESCTNYRTLK (149 aa)). Short sequence motifs (nuclear localization signal) lie at residues 914-921 (SRRGRKKD), 1124-1131 (KKRTYISV), and 1256-1263 (YRKLECLS). One copy of the Pumilio repeat lies at 1098 to 1137 (PTKKAVLSLLADIRGGDLVQRSIKGTKKRTYISVSDVIMK). A Bromo domain is found at 1130–1245 (SVSDVIMKKC…EKFKSLYEAE (116 aa)). Residues 1251–1273 (QKLKDYRKLECLSAEMKKEIKDI) adopt a coiled-coil conformation. A PHD-type 2 zinc finger spans residues 1287-1337 (EGVCKVCGVDKDDDSVLLCDTCDAEYHTYCLNPPLIRIPDGNWYCPSCVIA). The RING-type 2; degenerate zinc finger occupies 1290 to 1335 (CKVCGVDKDDDSVLLCDTCDAEYHTYCLNPPLIRIPDGNWYCPSCV). Residues 1337-1344 (AKRMAQEA) carry the Nuclear localization signal motif. Residues 1410–1437 (QHLEQCAEAIIEMQQKLRSLSSEWKNAK) adopt a coiled-coil conformation. 2 disordered regions span residues 1472–1553 (GCDP…NLPE) and 1565–1595 (GRNH…QELQ). Polar residues-rich tracts occupy residues 1492–1513 (SSTA…TQPG), 1523–1532 (KISSPETISS), and 1585–1595 (DASSQASQELQ). Residues 1588–1628 (SQASQELQACQQDLSATSNEIQNLQQSIRSIESQLLKQSIR) are a coiled coil. The Nuclear localization signal motif lies at 1761–1768 (EKRYGPCI). The interval 2136–2176 (IDETKPIISLPDQKSQPVSDSQERSSRVRRSGKKRKEPEGS) is disordered.

As to quaternary structure, interacts with histone H4. Expressed in leaves, buds, flowers and stems.

The protein localises to the nucleus. The catalysed reaction is L-lysyl-[protein] + acetyl-CoA = N(6)-acetyl-L-lysyl-[protein] + CoA + H(+). In terms of biological role, probable transcriptional regulator that acts as a histone acetyltransferase. Mediates the acetylation of histone H3 and H4 of target loci (e.g. FLC). Involved in an auxin-independent regulation of shoot branching and flowering time. The sequence is that of Methyl-CpG-binding domain-containing protein 9 (MBD9) from Arabidopsis thaliana (Mouse-ear cress).